The sequence spans 129 residues: Lysozyme C (129 aa).

Residues 1–129 (KVFGRCELAA…VRVWIKGCRL (129 aa)) enclose the C-type lysozyme domain. 4 cysteine pairs are disulfide-bonded: cysteine 6-cysteine 127, cysteine 30-cysteine 115, cysteine 64-cysteine 80, and cysteine 76-cysteine 94. Active-site residues include glutamate 35 and aspartate 52.

Belongs to the glycosyl hydrolase 22 family. In terms of assembly, monomer.

It localises to the secreted. It carries out the reaction Hydrolysis of (1-&gt;4)-beta-linkages between N-acetylmuramic acid and N-acetyl-D-glucosamine residues in a peptidoglycan and between N-acetyl-D-glucosamine residues in chitodextrins.. Functionally, lysozymes have primarily a bacteriolytic function; those in tissues and body fluids are associated with the monocyte-macrophage system and enhance the activity of immunoagents. This is Lysozyme C (LYZ) from Numida meleagris (Helmeted guineafowl).